Consider the following 355-residue polypeptide: Uroporphyrinogen decarboxylase (355 aa).

Substrate contacts are provided by residues 27 to 31 (RQAGR), F46, D77, Y154, S209, and H327.

It belongs to the uroporphyrinogen decarboxylase family. Homodimer.

It is found in the cytoplasm. The enzyme catalyses uroporphyrinogen III + 4 H(+) = coproporphyrinogen III + 4 CO2. The protein operates within porphyrin-containing compound metabolism; protoporphyrin-IX biosynthesis; coproporphyrinogen-III from 5-aminolevulinate: step 4/4. In terms of biological role, catalyzes the decarboxylation of four acetate groups of uroporphyrinogen-III to yield coproporphyrinogen-III. The polypeptide is Uroporphyrinogen decarboxylase (Nitrosomonas europaea (strain ATCC 19718 / CIP 103999 / KCTC 2705 / NBRC 14298)).